Here is a 601-residue protein sequence, read N- to C-terminus: Aspartate--tRNA(Asp/Asn) ligase (601 aa).

An L-aspartate-binding site is contributed by Glu-187. An aspartate region spans residues Gln-211–Lys-214. Positions 233 and 461 each coordinate L-aspartate. An ATP-binding site is contributed by Arg-233–Glu-235. Glu-495 contributes to the ATP binding site. Arg-502 lines the L-aspartate pocket. Gly-547–Arg-550 is a binding site for ATP.

The protein belongs to the class-II aminoacyl-tRNA synthetase family. Type 1 subfamily. As to quaternary structure, homodimer.

Its subcellular location is the cytoplasm. It catalyses the reaction tRNA(Asx) + L-aspartate + ATP = L-aspartyl-tRNA(Asx) + AMP + diphosphate. In terms of biological role, aspartyl-tRNA synthetase with relaxed tRNA specificity since it is able to aspartylate not only its cognate tRNA(Asp) but also tRNA(Asn). Reaction proceeds in two steps: L-aspartate is first activated by ATP to form Asp-AMP and then transferred to the acceptor end of tRNA(Asp/Asn). The protein is Aspartate--tRNA(Asp/Asn) ligase of Pelodictyon phaeoclathratiforme (strain DSM 5477 / BU-1).